We begin with the raw amino-acid sequence, 966 residues long: Glycine dehydrogenase (decarboxylating) (966 aa).

Lys-713 is modified (N6-(pyridoxal phosphate)lysine).

The protein belongs to the GcvP family. The glycine cleavage system is composed of four proteins: P, T, L and H. It depends on pyridoxal 5'-phosphate as a cofactor.

It carries out the reaction N(6)-[(R)-lipoyl]-L-lysyl-[glycine-cleavage complex H protein] + glycine + H(+) = N(6)-[(R)-S(8)-aminomethyldihydrolipoyl]-L-lysyl-[glycine-cleavage complex H protein] + CO2. The glycine cleavage system catalyzes the degradation of glycine. The P protein binds the alpha-amino group of glycine through its pyridoxal phosphate cofactor; CO(2) is released and the remaining methylamine moiety is then transferred to the lipoamide cofactor of the H protein. The sequence is that of Glycine dehydrogenase (decarboxylating) from Psychromonas ingrahamii (strain DSM 17664 / CCUG 51855 / 37).